The following is a 184-amino-acid chain: ADP-ribosylation factor-like protein 2 (184 aa).

Gly-2 carries N-myristoyl glycine lipidation. 23–30 contributes to the GTP binding site; sequence GLDNAGKT. At Ser-45 the chain carries Phosphoserine. GTP contacts are provided by residues 66–70 and Gly-68; that span reads DVGGQ. Residue Lys-71 forms a Glycyl lysine isopeptide (Lys-Gly) (interchain with G-Cter in ubiquitin) linkage. Position 125-128 (125-128) interacts with GTP; sequence NKQD.

It belongs to the small GTPase superfamily. Arf family. Found in a complex with ARL2, ARL2BP and SLC25A6. Found in a complex with at least ARL2, PPP2CB, PPP2R1A, PPP2R2A, PPP2R5E and TBCD. Found in a complex with ARL2, ARL2BP and SLC25A4. The GTP-bound form interacts with PDE6D. Interacts with ELMOD2. The GTP-bound form interacts with ARL2BP. Interacts, preferentially in its GDP-bound state, with TBCD. Interacts with UNC119. Not N-myristoylated.

It is found in the mitochondrion intermembrane space. It localises to the cytoplasm. The protein localises to the cytoskeleton. Its subcellular location is the microtubule organizing center. The protein resides in the centrosome. It is found in the nucleus. Its function is as follows. Small GTP-binding protein which cycles between an inactive GDP-bound and an active GTP-bound form, and the rate of cycling is regulated by guanine nucleotide exchange factors (GEF) and GTPase-activating proteins (GAP). GTP-binding protein that does not act as an allosteric activator of the cholera toxin catalytic subunit. Regulates formation of new microtubules and centrosome integrity. Prevents the TBCD-induced microtubule destruction. Participates in association with TBCD, in the disassembly of the apical junction complexes. Antagonizes the effect of TBCD on epithelial cell detachment and tight and adherens junctions disassembly. Together with ARL2, plays a role in the nuclear translocation, retention and transcriptional activity of STAT3. Component of a regulated secretory pathway involved in Ca(2+)-dependent release of acetylcholine. Required for normal progress through the cell cycle. Also regulates mitochondrial integrity and function. The sequence is that of ADP-ribosylation factor-like protein 2 (ARL2) from Homo sapiens (Human).